The following is a 638-amino-acid chain: Terrein cluster-specific transcription factor terR (638 aa).

The segment at residues 50-76 is a DNA-binding region (zn(2)-C6 fungal-type); sequence CDMCKSKKVRCDGGTPCSYCNLHDLRC.

The protein localises to the nucleus. Transcription factor that regulates specifically the terrein biosynthesis gene cluster. Recognizes CGG direct repeat consensus sequences in the terrein cluster forming the high affinity consensus motif TCGGHHWYHCGGH. The sequence is that of Terrein cluster-specific transcription factor terR from Aspergillus terreus (strain NIH 2624 / FGSC A1156).